Here is a 198-residue protein sequence, read N- to C-terminus: Pyridoxal 5'-phosphate synthase subunit PdxT (198 aa).

An L-glutamine-binding site is contributed by 52–54; that stretch reads GES. The active-site Nucleophile is cysteine 84. L-glutamine is bound by residues arginine 116 and 143-144; that span reads IR. Residues histidine 179 and glutamate 181 each act as charge relay system in the active site.

It belongs to the glutaminase PdxT/SNO family. In the presence of PdxS, forms a dodecamer of heterodimers. Only shows activity in the heterodimer.

The catalysed reaction is aldehydo-D-ribose 5-phosphate + D-glyceraldehyde 3-phosphate + L-glutamine = pyridoxal 5'-phosphate + L-glutamate + phosphate + 3 H2O + H(+). It catalyses the reaction L-glutamine + H2O = L-glutamate + NH4(+). The protein operates within cofactor biosynthesis; pyridoxal 5'-phosphate biosynthesis. Catalyzes the hydrolysis of glutamine to glutamate and ammonia as part of the biosynthesis of pyridoxal 5'-phosphate. The resulting ammonia molecule is channeled to the active site of PdxS. This is Pyridoxal 5'-phosphate synthase subunit PdxT from Caldivirga maquilingensis (strain ATCC 700844 / DSM 13496 / JCM 10307 / IC-167).